The primary structure comprises 241 residues: Neuromodulin (241 aa).

The segment covering 1 to 26 (TKQVEKNEDGDQKIEQDGIKPEDKAH) has biased composition (basic and acidic residues). Residues 1–241 (TKQVEKNEDG…EESKADQENA (241 aa)) form a disordered region. The IQ domain occupies 25 to 54 (AHKAATKIQASFRGHITRKKLKGEKKGDAP). Low complexity-rich tracts occupy residues 80–95 (APAA…AQQE) and 118–131 (SEQP…PAAS). 2 stretches are compositionally biased toward basic and acidic residues: residues 132–147 (SEEK…REST) and 159–171 (KADE…EPKQ). Residues 172-198 (ADVPAADTTATTTPAAEDATAKATAQP) show a composition bias toward low complexity. Composition is skewed to basic and acidic residues over residues 208 to 220 (TEEK…ETKP) and 232 to 241 (EESKADQENA).

The protein belongs to the neuromodulin family. In terms of assembly, binds calmodulin with a greater affinity in the absence of Ca(2+) than in its presence. Post-translationally, palmitoylated. Palmitoylation is essential for plasma membrane association.

It is found in the cell membrane. The protein resides in the cell projection. Its subcellular location is the growth cone membrane. The protein localises to the synapse. It localises to the filopodium membrane. Its function is as follows. This protein is associated with nerve growth. It is a major component of the motile 'growth cones' that form the tips of elongating axons. Plays a role in axonal and dendritic filopodia induction. The polypeptide is Neuromodulin (GAP43) (Serinus canaria (Island canary)).